The primary structure comprises 180 residues: UPF0227 protein YE1706 (180 aa).

The protein belongs to the UPF0227 family.

In Yersinia enterocolitica serotype O:8 / biotype 1B (strain NCTC 13174 / 8081), this protein is UPF0227 protein YE1706.